Consider the following 188-residue polypeptide: UPF0301 protein XC_1365 (188 aa).

The protein belongs to the UPF0301 (AlgH) family.

The polypeptide is UPF0301 protein XC_1365 (Xanthomonas campestris pv. campestris (strain 8004)).